The primary structure comprises 20 residues: Apidaecin 1+ (20 aa).

The tract at residues 1–20 is disordered; it reads GKPNRPRPAPIQPRPPHPRL.

It belongs to the apidaecin family.

It is found in the secreted. In terms of biological role, antimicrobial peptide active against many Gram-negative enterobacterial and plant-associated bacterial species. Not active against other bacterial species like H.pylori, P.mirabilis, B.pertussis or N.gonorrhoeae. Among others, also active against C.jejuni and L.pneumophila but not against Y.enterocolitica. Its function is as follows. Among others, also active against Y.enterocolitica butnot against L.pneumophila and C.jejuni. In Pimpla disparis (Parasitic wasp), this protein is Apidaecin 1+.